The following is a 232-amino-acid chain: MRTLWRWLGKGVAAAVALVLLYQLWIFAHVLWWIDHDPRSTAFMETGLARQQAKNRDAVLRHKWVPYDRISNNLKRAVVAAEDARFVEHAGFDVAGIQKAFQKNVKKGRLVAGGSTITQQLAKNLFLSGERSFLRKGQEVVITLMIESTWSKRRILEVYLNVIEWGNGIYGAEAASRRYYKKSAATLSRDQAARMAAMIPNPRWYENHRGSRLYQRRVVLIKRYMGSVAVPR.

Residues 14 to 34 form a helical membrane-spanning segment; it reads AAVALVLLYQLWIFAHVLWWI.

The protein belongs to the glycosyltransferase 51 family.

The protein localises to the cell inner membrane. The catalysed reaction is [GlcNAc-(1-&gt;4)-Mur2Ac(oyl-L-Ala-gamma-D-Glu-L-Lys-D-Ala-D-Ala)](n)-di-trans,octa-cis-undecaprenyl diphosphate + beta-D-GlcNAc-(1-&gt;4)-Mur2Ac(oyl-L-Ala-gamma-D-Glu-L-Lys-D-Ala-D-Ala)-di-trans,octa-cis-undecaprenyl diphosphate = [GlcNAc-(1-&gt;4)-Mur2Ac(oyl-L-Ala-gamma-D-Glu-L-Lys-D-Ala-D-Ala)](n+1)-di-trans,octa-cis-undecaprenyl diphosphate + di-trans,octa-cis-undecaprenyl diphosphate + H(+). It participates in cell wall biogenesis; peptidoglycan biosynthesis. In terms of biological role, peptidoglycan polymerase that catalyzes glycan chain elongation from lipid-linked precursors. This Thiobacillus denitrificans (strain ATCC 25259 / T1) protein is Biosynthetic peptidoglycan transglycosylase.